Here is a 235-residue protein sequence, read N- to C-terminus: Ribonuclease PH (235 aa).

Phosphate-binding positions include Arg86 and 124–126 (GTR).

Belongs to the RNase PH family. In terms of assembly, homohexameric ring arranged as a trimer of dimers.

The catalysed reaction is tRNA(n+1) + phosphate = tRNA(n) + a ribonucleoside 5'-diphosphate. Its function is as follows. Phosphorolytic 3'-5' exoribonuclease that plays an important role in tRNA 3'-end maturation. Removes nucleotide residues following the 3'-CCA terminus of tRNAs; can also add nucleotides to the ends of RNA molecules by using nucleoside diphosphates as substrates, but this may not be physiologically important. Probably plays a role in initiation of 16S rRNA degradation (leading to ribosome degradation) during starvation. In Legionella pneumophila (strain Paris), this protein is Ribonuclease PH.